A 168-amino-acid polypeptide reads, in one-letter code: Large ribosomal subunit protein uL10 (168 aa).

The protein belongs to the universal ribosomal protein uL10 family. As to quaternary structure, part of the ribosomal stalk of the 50S ribosomal subunit. The N-terminus interacts with L11 and the large rRNA to form the base of the stalk. The C-terminus forms an elongated spine to which L12 dimers bind in a sequential fashion forming a multimeric L10(L12)X complex.

Forms part of the ribosomal stalk, playing a central role in the interaction of the ribosome with GTP-bound translation factors. This is Large ribosomal subunit protein uL10 from Clostridium acetobutylicum (strain ATCC 824 / DSM 792 / JCM 1419 / IAM 19013 / LMG 5710 / NBRC 13948 / NRRL B-527 / VKM B-1787 / 2291 / W).